The following is a 446-amino-acid chain: Methanogenesis regulatory protein FilR1 (446 aa).

Residues 297-416 enclose the Response regulatory domain; sequence DVMIVEDDLG…QRLPEIAEEA (120 aa). Residue D350 is modified to 4-aspartylphosphate.

Post-translationally, phosphorylated by FilI.

Member of the two-component regulatory system FilI/FilRs, which is involved in the regulation of methanogenesis. Regulates its own expression, expression of the filI-filR2 operon, and of genes involved in methanogenesis such as acs1, acs4 and mtrABC. Acts by binding to the promoters. The polypeptide is Methanogenesis regulatory protein FilR1 (Methanothrix harundinacea (strain 6Ac) (Methanosaeta harundinacea)).